The chain runs to 218 residues: GTP cyclohydrolase 1 (218 aa).

Zn(2+) contacts are provided by cysteine 107, histidine 110, and cysteine 178.

Belongs to the GTP cyclohydrolase I family. Homomer.

It carries out the reaction GTP + H2O = 7,8-dihydroneopterin 3'-triphosphate + formate + H(+). It participates in cofactor biosynthesis; 7,8-dihydroneopterin triphosphate biosynthesis; 7,8-dihydroneopterin triphosphate from GTP: step 1/1. In Azorhizobium caulinodans (strain ATCC 43989 / DSM 5975 / JCM 20966 / LMG 6465 / NBRC 14845 / NCIMB 13405 / ORS 571), this protein is GTP cyclohydrolase 1.